Here is a 210-residue protein sequence, read N- to C-terminus: Small ribosomal subunit protein uS3 (210 aa).

The 69-residue stretch at 38–106 folds into the KH type-2 domain; it reads IRQFLKKRLY…EVFININEVR (69 aa).

This sequence belongs to the universal ribosomal protein uS3 family. As to quaternary structure, part of the 30S ribosomal subunit. Forms a tight complex with proteins S10 and S14.

Functionally, binds the lower part of the 30S subunit head. Binds mRNA in the 70S ribosome, positioning it for translation. In Trichlorobacter lovleyi (strain ATCC BAA-1151 / DSM 17278 / SZ) (Geobacter lovleyi), this protein is Small ribosomal subunit protein uS3.